The following is a 316-amino-acid chain: Protein C4 (316 aa).

Belongs to the poxviridae OPG031 protein family.

The protein localises to the host cytoplasm. It is found in the host nucleus. Its function is as follows. Plays a role in the inhibition of host NF-kappa-B activation. Mechanistically, blocks the subunit p65/RELA translocation into the host nucleus. The chain is Protein C4 (OPG031) from Homo sapiens (Human).